Consider the following 120-residue polypeptide: Putative gamma-glutamylcyclotransferase MJ1514 (120 aa).

7–10 lines the substrate pocket; sequence YGSL. The active-site Proton acceptor is the Glu74.

Belongs to the gamma-glutamylcyclotransferase family.

Functionally, putative gamma-glutamylcyclotransferase. The protein is Putative gamma-glutamylcyclotransferase MJ1514 of Methanocaldococcus jannaschii (strain ATCC 43067 / DSM 2661 / JAL-1 / JCM 10045 / NBRC 100440) (Methanococcus jannaschii).